The chain runs to 835 residues: Protein P (835 aa).

The segment at 1–176 is terminal protein domain (TP); sequence MPLSYQHFRK…FFGTPYTWEH (176 aa). The tract at residues 177 to 334 is spacer; the sequence is KLQHGTQPVN…HCLHHIVKLL (158 aa). Disordered regions lie at residues 211 to 235 and 258 to 288; these read LGQK…WSRT and RHPS…PTSH. The polymerase/reverse transcriptase domain (RT) stretch occupies residues 335 to 680; sequence DDWGPCQHHG…YMHLYPVARQ (346 aa). Residues 345 to 590 enclose the Reverse transcriptase domain; the sequence is HHFIRIPRTP…KALNFMGYVI (246 aa). Mg(2+)-binding residues include Asp417, Asp541, and Asp542.

It belongs to the hepadnaviridae P protein family.

It carries out the reaction DNA(n) + a 2'-deoxyribonucleoside 5'-triphosphate = DNA(n+1) + diphosphate. The enzyme catalyses Endonucleolytic cleavage to 5'-phosphomonoester.. With respect to regulation, activated by host HSP70 and HSP40 in vitro to be able to bind the epsilon loop of the pgRNA. Because deletion of the RNase H region renders the protein partly chaperone-independent, the chaperones may be needed indirectly to relieve occlusion of the RNA-binding site by this domain. Inhibited by several reverse-transcriptase inhibitors: Lamivudine, Adefovir and Entecavir. Functionally, multifunctional enzyme that converts the viral RNA genome into dsDNA in viral cytoplasmic capsids. This enzyme displays a DNA polymerase activity that can copy either DNA or RNA templates, and a ribonuclease H (RNase H) activity that cleaves the RNA strand of RNA-DNA heteroduplexes in a partially processive 3'- to 5'-endonucleasic mode. Neo-synthesized pregenomic RNA (pgRNA) are encapsidated together with the P protein, and reverse-transcribed inside the nucleocapsid. Initiation of reverse-transcription occurs first by binding the epsilon loop on the pgRNA genome, and is initiated by protein priming, thereby the 5'-end of (-)DNA is covalently linked to P protein. Partial (+)DNA is synthesized from the (-)DNA template and generates the relaxed circular DNA (RC-DNA) genome. After budding and infection, the RC-DNA migrates in the nucleus, and is converted into a plasmid-like covalently closed circular DNA (cccDNA). The activity of P protein does not seem to be necessary for cccDNA generation, and is presumably released from (+)DNA by host nuclear DNA repair machinery. This Woolly monkey hepatitis B virus (isolate Louisville) (WMHBV) protein is Protein P.